A 252-amino-acid polypeptide reads, in one-letter code: 2-succinyl-6-hydroxy-2,4-cyclohexadiene-1-carboxylate synthase (252 aa).

Belongs to the AB hydrolase superfamily. MenH family. Monomer.

The enzyme catalyses 5-enolpyruvoyl-6-hydroxy-2-succinyl-cyclohex-3-ene-1-carboxylate = (1R,6R)-6-hydroxy-2-succinyl-cyclohexa-2,4-diene-1-carboxylate + pyruvate. Its pathway is quinol/quinone metabolism; 1,4-dihydroxy-2-naphthoate biosynthesis; 1,4-dihydroxy-2-naphthoate from chorismate: step 3/7. It functions in the pathway quinol/quinone metabolism; menaquinone biosynthesis. Catalyzes a proton abstraction reaction that results in 2,5-elimination of pyruvate from 2-succinyl-5-enolpyruvyl-6-hydroxy-3-cyclohexene-1-carboxylate (SEPHCHC) and the formation of 2-succinyl-6-hydroxy-2,4-cyclohexadiene-1-carboxylate (SHCHC). This Salmonella newport (strain SL254) protein is 2-succinyl-6-hydroxy-2,4-cyclohexadiene-1-carboxylate synthase.